The sequence spans 309 residues: Biotin synthase (309 aa).

The Radical SAM core domain maps to 35 to 259; the sequence is NKIQISSLLS…MIPKSYIRLS (225 aa). [4Fe-4S] cluster contacts are provided by Cys-50, Cys-54, and Cys-57. 4 residues coordinate [2Fe-2S] cluster: Cys-94, Cys-125, Cys-185, and Arg-257.

This sequence belongs to the radical SAM superfamily. Biotin synthase family. In terms of assembly, homodimer. Requires [4Fe-4S] cluster as cofactor. [2Fe-2S] cluster is required as a cofactor.

The enzyme catalyses (4R,5S)-dethiobiotin + (sulfur carrier)-SH + 2 reduced [2Fe-2S]-[ferredoxin] + 2 S-adenosyl-L-methionine = (sulfur carrier)-H + biotin + 2 5'-deoxyadenosine + 2 L-methionine + 2 oxidized [2Fe-2S]-[ferredoxin]. It participates in cofactor biosynthesis; biotin biosynthesis; biotin from 7,8-diaminononanoate: step 2/2. Catalyzes the conversion of dethiobiotin (DTB) to biotin by the insertion of a sulfur atom into dethiobiotin via a radical-based mechanism. The sequence is that of Biotin synthase from Rickettsia felis (strain ATCC VR-1525 / URRWXCal2) (Rickettsia azadi).